Reading from the N-terminus, the 382-residue chain is uncharacterized protein (382 aa).

Helical transmembrane passes span 14–34 (GLLL…LWLA), 45–65 (VVSS…GYVI), 79–99 (FIFA…SWLA), 102–122 (FVAG…LMCS), 131–151 (LLAA…LLVS), 157–177 (LMSV…PLLF), 204–224 (LGVN…GLMP), 235–255 (ASIG…QWPI), 270–290 (VQVF…AMAP), 291–311 (ALFI…AWAC), 325–345 (ALLL…AMLM), and 348–368 (FSDN…LLML).

Belongs to the major facilitator superfamily. YcaD (TC 2.A.1.26) family.

The protein resides in the cell inner membrane. This is an uncharacterized protein from Shigella flexneri serotype 5b (strain 8401).